The primary structure comprises 472 residues: MSLSLYNTLHRRSEPFEPLEANLVRMYCCGITVYDYCHLGHARTCLIWDVVRRYLQWSGYEVHYIQNFTDIDDKILNRARAEKSSMGAIAEKFIEAYFEDMEALHIQPADEYPRATHSLDGIQKLIHDLEQRGFAYASQGDVYYAVRKFDGYGKLSGRKLDDMQAGASGRVNEDPDAPKKHDPFDFALWKAAKAGEPAWDSPWGAGRPGWHIECSAMVRDRLGETIDIHVGGSDLIFPHHENEIAQSEAATGQPLAKYWLHNGMVKVEGEKMSKSLGNFITIRELLKKYDPMAVRLFILQAHYTKPLDFTDEALTAATKGWETLNDALLFGAEHLDTNNITADKGILAKFKAIVDNDLNFSGGLAILFELAKELKKEKNILVHEGKLQQNPQILASLWLTLKELADILGFVPETKQQAAGLTDAEIEDLIQQRKDARANKNYAEGDRLRDLLAEKGIVLVDKPGGITEWHRE.

Cysteine 29 is a binding site for Zn(2+). The short motif at 31 to 41 is the 'HIGH' region element; the sequence is ITVYDYCHLGH. Positions 214, 239, and 243 each coordinate Zn(2+). The 'KMSKS' region motif lies at 271-275; sequence KMSKS. Lysine 274 serves as a coordination point for ATP.

Belongs to the class-I aminoacyl-tRNA synthetase family. As to quaternary structure, monomer. The cofactor is Zn(2+).

It localises to the cytoplasm. It carries out the reaction tRNA(Cys) + L-cysteine + ATP = L-cysteinyl-tRNA(Cys) + AMP + diphosphate. The sequence is that of Cysteine--tRNA ligase from Picosynechococcus sp. (strain ATCC 27264 / PCC 7002 / PR-6) (Agmenellum quadruplicatum).